The sequence spans 453 residues: Protein LIAT1 (453 aa).

Residues 1–152 are disordered; sequence METRGPGLAV…HLPSDSSTVS (152 aa). The lysine-rich domain stretch occupies residues 82-103; sequence KRKVKKKKRKKKTKGSGKGDDK. Residues 83 to 96 show a composition bias toward basic residues; it reads RKVKKKKRKKKTKG. Over residues 106–117 the composition is skewed to low complexity; the sequence is SQSLKSQPLSSS. The span at 125-145 shows a compositional bias: basic and acidic residues; sequence CKERGPKPEHRQSKVEKKHLP. Residues 145–197 are interaction with ATE1; that stretch reads PSDSSTVSLPDFAEIENLANRINESLRWDGILADPEAEKERIRIYKLNRRKRY. Repeat copies occupy residues 201-210, 211-220, 221-230, 231-240, 241-250, 251-260, 261-270, 271-280, 281-290, 291-300, 301-310, 311-320, 321-330, 331-340, 341-350, 351-360, 361-370, 371-380, 381-390, and 391-400. A 20 X 10 AA approximate tandem repeat of A-L-K-G-F-H-P-D-P-E region spans residues 201 to 400; the sequence is ALKGFHPDPE…ALKGFHTDPN (200 aa). 2 disordered regions span residues 225-306 and 320-432; these read FHPD…KGFH and EALK…CPNL. Positions 320 to 396 are enriched in basic and acidic residues; that stretch reads EALKGFHPDP…PDPEALKGFH (77 aa).

Self-associates (via Lys-rich domain); targets LIAT1 to the nucleolus. Interacts with ATE1; it is not a substrate of ATE1, the interaction takes place in the cytoplasm and seems to increase ATE1 arginyltransferase activity. Interacts with JMJD6 and MRPS14. In terms of processing, post-translationally modified by JMJD6 lysyl-hydroxylase activity at its Lys-rich domain, which inhibits its self-association and nucleolar localization.

The protein localises to the nucleus. Its subcellular location is the nucleolus. It localises to the cytoplasm. In terms of biological role, participates in nucleolar liquid-liquid phase separation (LLPS) through its N-terminal intrinsically disordered region (IDR). May be involved in ATE1-mediated N-terminal arginylation. The polypeptide is Protein LIAT1 (Homo sapiens (Human)).